The following is a 387-amino-acid chain: Sharpin (387 aa).

The interval Met1–Ala180 is self-association. The span at Glu122–Pro132 shows a compositional bias: polar residues. Residues Glu122–Leu169 are disordered. Phosphoserine is present on Ser165. The segment at Leu175–Gly310 is interaction with SHANK1. Positions Ile219–Val288 constitute a Ubiquitin-like domain. A disordered region spans residues Glu305–Gln349. Ser312 is modified (phosphoserine). Low complexity predominate over residues Pro339–Gln349. The RanBP2-type zinc finger occupies Leu348–Cys377.

In terms of assembly, monomer and homodimer. Component of the LUBAC complex (linear ubiquitin chain assembly complex) which consists of SHARPIN, RBCK1 and RNF31. LUBAC has a MW of approximately 600 kDa suggesting a heteromultimeric assembly of its subunits. Associates with the TNF-R1 signaling complex (TNF-RSC) in a stimulation-dependent manner. Interacts with EYA1, EYA2, SHANK1 and SHANK3 (via ANK repeats). In terms of tissue distribution, highly expressed in skeletal muscle and placenta and at lower levels in brain, heart, colon without mucosa, thymus, spleen, kidney, liver, small intestine, lung and peripheral blood leukocytes. Up-regulated in various tumor tissues such as kidney, liver, ovary and pancreas tumors.

Its subcellular location is the cytoplasm. It is found in the cytosol. It localises to the synapse. It participates in protein modification; protein ubiquitination. Functionally, component of the LUBAC complex which conjugates linear polyubiquitin chains in a head-to-tail manner to substrates and plays a key role in NF-kappa-B activation and regulation of inflammation. LUBAC conjugates linear polyubiquitin to IKBKG and RIPK1 and is involved in activation of the canonical NF-kappa-B and the JNK signaling pathways. Linear ubiquitination mediated by the LUBAC complex interferes with TNF-induced cell death and thereby prevents inflammation. LUBAC is recruited to the TNF-R1 signaling complex (TNF-RSC) following polyubiquitination of TNF-RSC components by BIRC2 and/or BIRC3 and to conjugate linear polyubiquitin to IKBKG and possibly other components contributing to the stability of the complex. The LUBAC complex is also involved in innate immunity by conjugating linear polyubiquitin chains at the surface of bacteria invading the cytosol to form the ubiquitin coat surrounding bacteria. LUBAC is not able to initiate formation of the bacterial ubiquitin coat, and can only promote formation of linear polyubiquitins on pre-existing ubiquitin. The bacterial ubiquitin coat acts as an 'eat-me' signal for xenophagy and promotes NF-kappa-B activation. Together with OTULIN, the LUBAC complex regulates the canonical Wnt signaling during angiogenesis. This Homo sapiens (Human) protein is Sharpin.